The following is a 1039-amino-acid chain: uncharacterized protein (1039 aa).

An N-terminal signal peptide occupies residues 1–28 (MKLFPRTLLKILVVSFILNFGVTSKSYA). 6 helical membrane-spanning segments follow: residues 326-346 (IVTAFLTLYVMLFGAKILLAG), 354-374 (YINFILKIIFVTYFSIGLNIT), 387-407 (MIQWAFPFLLNGINGLASWVM), 491-511 (MLVSLALAYPLLVISVAAFMV), 517-537 (CMVSIVILGILAPLFVPMFLF), and 551-571 (MISFLLQPMVVVTFMITMFSV). The tract at residues 654–680 (KPNQTCDPKAADADTKCNPKPGDSSTS) is disordered. A helical membrane pass occupies residues 710–730 (IKDILLALVTACFTLYLMYNF). Disordered regions lie at residues 799-875 (LVKG…PTTV), 917-949 (IKEAVPESQKEEPKEPRVKHTTEVEPELNLDEN), and 1004-1039 (LYRSVGGRAKDKATERNDGTIENRSKKIDSGSDENP). Residues 802–811 (GSGGGGGSEG) show a composition bias toward gly residues. Residues 812 to 836 (GDSFTSGGLRETSSTAATPSSALSS) are compositionally biased toward low complexity. Positions 843–861 (GTATPSSASEEMLDTSFSN) are enriched in polar residues. Basic and acidic residues-rich tracts occupy residues 917-939 (IKEAVPESQKEEPKEPRVKHTTE) and 1004-1033 (LYRSVGGRAKDKATERNDGTIENRSKKIDS).

This sequence belongs to the TrbL/VirB6 family.

It is found in the cell membrane. This is an uncharacterized protein from Rickettsia bellii (strain RML369-C).